A 235-amino-acid polypeptide reads, in one-letter code: Large ribosomal subunit protein uL1 (235 aa).

It belongs to the universal ribosomal protein uL1 family. In terms of assembly, part of the 50S ribosomal subunit.

Its function is as follows. Binds directly to 23S rRNA. The L1 stalk is quite mobile in the ribosome, and is involved in E site tRNA release. Functionally, protein L1 is also a translational repressor protein, it controls the translation of the L11 operon by binding to its mRNA. This Desulfovibrio desulfuricans (strain ATCC 27774 / DSM 6949 / MB) protein is Large ribosomal subunit protein uL1.